Here is a 364-residue protein sequence, read N- to C-terminus: Fructose-bisphosphate aldolase B (364 aa).

The substrate site is built by Arg56 and Lys147. The active-site Proton acceptor is the Glu188. The Schiff-base intermediate with dihydroxyacetone-P role is filled by Lys230.

Belongs to the class I fructose-bisphosphate aldolase family. As to quaternary structure, homotetramer.

It is found in the cytoplasm. Its subcellular location is the cytoskeleton. The protein resides in the microtubule organizing center. The protein localises to the centrosome. It localises to the centriolar satellite. The catalysed reaction is beta-D-fructose 1,6-bisphosphate = D-glyceraldehyde 3-phosphate + dihydroxyacetone phosphate. Its pathway is carbohydrate degradation; glycolysis; D-glyceraldehyde 3-phosphate and glycerone phosphate from D-glucose: step 4/4. The protein is Fructose-bisphosphate aldolase B (ALDOB) of Gallus gallus (Chicken).